The sequence spans 193 residues: Pyridoxal 5'-phosphate synthase subunit PdxT (193 aa).

50-52 (GES) serves as a coordination point for L-glutamine. The active-site Nucleophile is cysteine 82. L-glutamine is bound by residues arginine 109 and 136 to 137 (IR). Active-site charge relay system residues include histidine 172 and glutamate 174.

This sequence belongs to the glutaminase PdxT/SNO family. In terms of assembly, in the presence of PdxS, forms a dodecamer of heterodimers. Only shows activity in the heterodimer.

It carries out the reaction aldehydo-D-ribose 5-phosphate + D-glyceraldehyde 3-phosphate + L-glutamine = pyridoxal 5'-phosphate + L-glutamate + phosphate + 3 H2O + H(+). It catalyses the reaction L-glutamine + H2O = L-glutamate + NH4(+). It participates in cofactor biosynthesis; pyridoxal 5'-phosphate biosynthesis. Functionally, catalyzes the hydrolysis of glutamine to glutamate and ammonia as part of the biosynthesis of pyridoxal 5'-phosphate. The resulting ammonia molecule is channeled to the active site of PdxS. The sequence is that of Pyridoxal 5'-phosphate synthase subunit PdxT from Streptococcus pneumoniae (strain JJA).